The primary structure comprises 181 residues: MAVTNQMVAPRYAKALLEAAQDQNQVETVHEELQALQSVFNDNPTILTIFDNARITAADKDALMTTLTKDASPLVANLLKLTQQYGRFGALPAIISAFNQAYDEEAGIIAATVTTAVALSADQADALRSTIAARFGMKSTQLDQVVDPSVIGGVRIQARGSVIDGTVKHRFDKMKAALLAD.

This sequence belongs to the ATPase delta chain family. F-type ATPases have 2 components, F(1) - the catalytic core - and F(0) - the membrane proton channel. F(1) has five subunits: alpha(3), beta(3), gamma(1), delta(1), epsilon(1). F(0) has three main subunits: a(1), b(2) and c(10-14). The alpha and beta chains form an alternating ring which encloses part of the gamma chain. F(1) is attached to F(0) by a central stalk formed by the gamma and epsilon chains, while a peripheral stalk is formed by the delta and b chains.

The protein localises to the cell membrane. Its function is as follows. F(1)F(0) ATP synthase produces ATP from ADP in the presence of a proton or sodium gradient. F-type ATPases consist of two structural domains, F(1) containing the extramembraneous catalytic core and F(0) containing the membrane proton channel, linked together by a central stalk and a peripheral stalk. During catalysis, ATP synthesis in the catalytic domain of F(1) is coupled via a rotary mechanism of the central stalk subunits to proton translocation. In terms of biological role, this protein is part of the stalk that links CF(0) to CF(1). It either transmits conformational changes from CF(0) to CF(1) or is implicated in proton conduction. The polypeptide is ATP synthase subunit delta (Lacticaseibacillus paracasei (strain ATCC 334 / BCRC 17002 / CCUG 31169 / CIP 107868 / KCTC 3260 / NRRL B-441) (Lactobacillus paracasei)).